The chain runs to 260 residues: Ribosomal protein L11 methyltransferase (260 aa).

S-adenosyl-L-methionine-binding residues include threonine 119, glycine 140, aspartate 162, and asparagine 203.

This sequence belongs to the methyltransferase superfamily. PrmA family.

Its subcellular location is the cytoplasm. It carries out the reaction L-lysyl-[protein] + 3 S-adenosyl-L-methionine = N(6),N(6),N(6)-trimethyl-L-lysyl-[protein] + 3 S-adenosyl-L-homocysteine + 3 H(+). In terms of biological role, methylates ribosomal protein L11. This Thermosipho africanus (strain TCF52B) protein is Ribosomal protein L11 methyltransferase.